Here is a 104-residue protein sequence, read N- to C-terminus: L-rhamnose mutarotase (104 aa).

Tyrosine 18 is a substrate binding site. Histidine 22 acts as the Proton donor in catalysis. Substrate is bound by residues tyrosine 41 and 76–77 (WW).

It belongs to the rhamnose mutarotase family. Homodimer.

It localises to the cytoplasm. It carries out the reaction alpha-L-rhamnose = beta-L-rhamnose. It functions in the pathway carbohydrate metabolism; L-rhamnose metabolism. Involved in the anomeric conversion of L-rhamnose. This is L-rhamnose mutarotase from Escherichia fergusonii (strain ATCC 35469 / DSM 13698 / CCUG 18766 / IAM 14443 / JCM 21226 / LMG 7866 / NBRC 102419 / NCTC 12128 / CDC 0568-73).